A 289-amino-acid chain; its full sequence is S-methyl-5'-thioadenosine phosphorylase (289 aa).

Residues serine 24, 66-67 (RH), and 99-100 (TA) each bind phosphate. Methionine 202 serves as a coordination point for substrate. Residue threonine 203 coordinates phosphate. Residue 226-228 (DYD) participates in substrate binding.

The protein belongs to the PNP/MTAP phosphorylase family. MTAP subfamily. As to quaternary structure, homotrimer.

The protein localises to the cytoplasm. Its subcellular location is the nucleus. It carries out the reaction S-methyl-5'-thioadenosine + phosphate = 5-(methylsulfanyl)-alpha-D-ribose 1-phosphate + adenine. The protein operates within amino-acid biosynthesis; L-methionine biosynthesis via salvage pathway; S-methyl-5-thio-alpha-D-ribose 1-phosphate from S-methyl-5'-thioadenosine (phosphorylase route): step 1/1. Functionally, catalyzes the reversible phosphorylation of S-methyl-5'-thioadenosine (MTA) to adenine and 5-methylthioribose-1-phosphate. Involved in the breakdown of MTA, a major by-product of polyamine biosynthesis. Responsible for the first step in the methionine salvage pathway after MTA has been generated from S-adenosylmethionine. Has broad substrate specificity with 6-aminopurine nucleosides as preferred substrates. The protein is S-methyl-5'-thioadenosine phosphorylase of Drosophila pseudoobscura pseudoobscura (Fruit fly).